We begin with the raw amino-acid sequence, 315 residues long: KH domain-containing protein At5g56140 (315 aa).

Disordered stretches follow at residues 1–53 (MMMM…GGLR) and 136–158 (SQFPSERSVPSSPGPNWLNSPGS). Positions 7 to 28 (LGGGGGGGGGSGGGIGGGGGGR) are enriched in gly residues. Composition is skewed to polar residues over residues 31-53 (TYSSSLSVPPSAPQSPNYSGGLR) and 136-146 (SQFPSERSVPS). Positions 171-238 (DIPVDNYPNF…EHLNEPLHIL (68 aa)) constitute a KH domain. The disordered stretch occupies residues 289–315 (REEGSPMSGSVSPYNSLGMKRAKTREG). Phosphoserine is present on S300.

Its subcellular location is the nucleus. The polypeptide is KH domain-containing protein At5g56140 (Arabidopsis thaliana (Mouse-ear cress)).